We begin with the raw amino-acid sequence, 334 residues long: Probable tRNA pseudouridine synthase B (334 aa).

Asp-82 acts as the Nucleophile in catalysis. The 76-residue stretch at 250–325 (LPKIWIKDSA…IAVDVEKVFM (76 aa)) folds into the PUA domain.

It belongs to the pseudouridine synthase TruB family. Type 2 subfamily.

The enzyme catalyses uridine(55) in tRNA = pseudouridine(55) in tRNA. Could be responsible for synthesis of pseudouridine from uracil-55 in the psi GC loop of transfer RNAs. In Pyrococcus abyssi (strain GE5 / Orsay), this protein is Probable tRNA pseudouridine synthase B.